The following is a 108-amino-acid chain: Urease subunit beta (108 aa).

The protein belongs to the urease beta subunit family. In terms of assembly, heterotrimer of UreA (gamma), UreB (beta) and UreC (alpha) subunits. Three heterotrimers associate to form the active enzyme.

The protein resides in the cytoplasm. It catalyses the reaction urea + 2 H2O + H(+) = hydrogencarbonate + 2 NH4(+). It functions in the pathway nitrogen metabolism; urea degradation; CO(2) and NH(3) from urea (urease route): step 1/1. The sequence is that of Urease subunit beta from Microcystis aeruginosa (strain NIES-843 / IAM M-2473).